A 183-amino-acid chain; its full sequence is Acyl-homoserine-lactone synthase (183 aa).

Belongs to the autoinducer synthase family.

It catalyses the reaction a fatty acyl-[ACP] + S-adenosyl-L-methionine = an N-acyl-L-homoserine lactone + S-methyl-5'-thioadenosine + holo-[ACP] + H(+). Functionally, involved in the synthesis of the acyl-homoserine lactone (AHL) signal N-(3-hydroxydodecanoyl)-L-HSL (3-hydroxy-C(12)-HSL or OH-dDHL). Probably part of a quorum-sensing system with AnoR. The sequence is that of Acyl-homoserine-lactone synthase from Acinetobacter nosocomialis.